The primary structure comprises 312 residues: Erlin (312 aa).

The Cytoplasmic portion of the chain corresponds to M1–T3. Residues E4–I24 form a helical membrane-spanning segment. Over E25–V312 the chain is Lumenal. Residue N104 is glycosylated (N-linked (GlcNAc...) asparagine).

The protein belongs to the band 7/mec-2 family. In terms of assembly, seems to form a multimeric complex. Expressed in the germline only.

The protein localises to the endoplasmic reticulum membrane. In Caenorhabditis elegans, this protein is Erlin.